A 188-amino-acid chain; its full sequence is GTP cyclohydrolase 1 (188 aa).

Cys76, His79, and Cys148 together coordinate Zn(2+).

It belongs to the GTP cyclohydrolase I family. In terms of assembly, toroid-shaped homodecamer, composed of two pentamers of five dimers.

It catalyses the reaction GTP + H2O = 7,8-dihydroneopterin 3'-triphosphate + formate + H(+). It functions in the pathway cofactor biosynthesis; 7,8-dihydroneopterin triphosphate biosynthesis; 7,8-dihydroneopterin triphosphate from GTP: step 1/1. The sequence is that of GTP cyclohydrolase 1 from Caldanaerobacter subterraneus subsp. tengcongensis (strain DSM 15242 / JCM 11007 / NBRC 100824 / MB4) (Thermoanaerobacter tengcongensis).